A 468-amino-acid chain; its full sequence is 3-isopropylmalate dehydratase large subunit (468 aa).

[4Fe-4S] cluster-binding residues include Cys349, Cys409, and Cys412.

It belongs to the aconitase/IPM isomerase family. LeuC type 1 subfamily. In terms of assembly, heterodimer of LeuC and LeuD. Requires [4Fe-4S] cluster as cofactor.

It catalyses the reaction (2R,3S)-3-isopropylmalate = (2S)-2-isopropylmalate. Its pathway is amino-acid biosynthesis; L-leucine biosynthesis; L-leucine from 3-methyl-2-oxobutanoate: step 2/4. Its function is as follows. Catalyzes the isomerization between 2-isopropylmalate and 3-isopropylmalate, via the formation of 2-isopropylmaleate. This is 3-isopropylmalate dehydratase large subunit from Shewanella baltica (strain OS223).